The primary structure comprises 409 residues: Beta-arrestin-2 (409 aa).

Position 48 is a phosphotyrosine (tyrosine 48). Hydroxyproline; by PHD2 is present on residues proline 176 and proline 181. The segment at 240–409 (ADICLFSTAQ…KDDDYDDQLC (170 aa)) is interaction with TRAF6. Serine 360 is subject to Phosphoserine. Residues 363-409 (PETDVPVDTNLIEFDTNYATDDDIVFEDFARLRLKGMKDDDYDDQLC) are interaction with AP2B1. Phosphothreonine is present on threonine 382. The short motif at 385–395 (DIVFEDFARLR) is the [DE]-X(1,2)-F-X-X-[FL]-X-X-X-R motif element.

It belongs to the arrestin family. In terms of assembly, homooligomer; the self-association is mediated by InsP6-binding. Heterooligomer with ARRB1; the association is mediated by InsP6-binding. Interacts with ADRB2 and CHRM2. Interacts with PDE4A. Interacts with PDE4D. Interacts with MAPK10, MAPK1 and MAPK3. Interacts with DRD2. Interacts with FSHR. Interacts with CLTC. Interacts with HTR2C. Interacts with CCR5. Interacts with CXCR4. Interacts with SRC. Interacts with DUSP16; the interaction is interrupted by stimulation of AGTR1 and activation of MAPK10. Interacts with CHUK; the interaction is enhanced stimulation of ADRB2. Interacts with RELA. Interacts with MDM2; the interaction is enhanced by activation of GPCRs. Interacts with SLC9A5. Interacts with TRAF6. Interacts with IGF1R. Interacts with ENG. Interacts with KIR2DL1, KIR2DL3 and KIR2DL4. Interacts with LDLR. Interacts with AP2B1. Interacts with C5AR1. Interacts with RAF1. Interacts with MAP2K1. Interacts with MAPK1. Interacts with MAPK10; the interaction enhances MAPK10 activation by MAP3K5. Interacts with MAP2K4; the interaction is enhanced by presence of MAP3K5 and MAPK10. Interacts with MAP3K5. Interacts with AKT1. Interacts with IKBKB and MAP3K14. Interacts with SMO (activated). Interacts with GSK3A and GSK3B. Associates with protein phosphatase 2A (PP2A). Interacts with DHX8; the interaction is detected in the nucleus upon OR1D2 stimulation. Interacts with GAPDHS; the interaction is detected in the nucleus upon OR1D2 stimulation. Interacts with H2AFX; the interaction is detected in the nucleus upon OR1D2 stimulation. Interacts with KIF14; the interaction is detected in the nucleus upon OR1D2 stimulation. Interacts with RCC1; the interaction is detected in the nucleus upon OR1D2 stimulation. Interacts with CXCR4; the interaction is dependent on C-terminal phosphorylation of CXCR4 and allows activation of MAPK1 and MAPK3. Interacts with GPR143. Interacts with HCK and CXCR1 (phosphorylated). Interacts with ACKR3 and ACKR4. Interacts with ARRDC1; the interaction is direct. Interacts with GPR61, GPR62 and GPR135. Interacts (via NACHT and LRR domains) with NLRP3; this interaction is direct and inducible by omega-3 polyunsaturated fatty acids (PUFAs). Interacts with FFAR4 (via C-terminus); this interaction is stimulated by long-chain fatty acids (LCFAs). Interacts with GPR35. Interacts with GPR84. Interacts with TIGIT; this interaction inhibits the NF-kappa-B pathway. Interacts with TGFBR3. Phosphorylated at Thr-382 in the cytoplasm; probably dephosphorylated at the plasma membrane. The phosphorylation does not regulate internalization and recycling of ADRB2, interaction with clathrin or AP2B1. In terms of processing, the ubiquitination status appears to regulate the formation and trafficking of beta-arrestin-GPCR complexes and signaling. Ubiquitination appears to occur GPCR-specific. Ubiquitinated by MDM2; the ubiquitination is required for rapid internalization of ADRB2. Deubiquitinated by USP33; the deubiquitination leads to a dissociation of the beta-arrestin-GPCR complex. Stimulation of a class A GPCR, such as ADRB2, induces transient ubiquitination and subsequently promotes association with USP33. Stimulation of a class B GPCR promotes a sustained ubiquitination. Deubiquitinated by USP20; allowing USP20 to deubiquitinate TRAF6 leading to inhibition of NF-kappa-B signaling. Post-translationally, hydroxylation by PHD2 modulates the rate of internalization by slowing down recruitment to the plasma membrane and inhibiting subsequent co-internalization with class A receptors.

It localises to the cytoplasm. Its subcellular location is the nucleus. The protein localises to the cell membrane. It is found in the membrane. The protein resides in the clathrin-coated pit. It localises to the cytoplasmic vesicle. Functionally, functions in regulating agonist-mediated G-protein coupled receptor (GPCR) signaling by mediating both receptor desensitization and resensitization processes. During homologous desensitization, beta-arrestins bind to the GPRK-phosphorylated receptor and sterically preclude its coupling to the cognate G-protein; the binding appears to require additional receptor determinants exposed only in the active receptor conformation. The beta-arrestins target many receptors for internalization by acting as endocytic adapters (CLASPs, clathrin-associated sorting proteins) and recruiting the GPRCs to the adapter protein 2 complex 2 (AP-2) in clathrin-coated pits (CCPs). However, the extent of beta-arrestin involvement appears to vary significantly depending on the receptor, agonist and cell type. Internalized arrestin-receptor complexes traffic to intracellular endosomes, where they remain uncoupled from G-proteins. Two different modes of arrestin-mediated internalization occur. Class A receptors, like ADRB2, OPRM1, ENDRA, D1AR and ADRA1B dissociate from beta-arrestin at or near the plasma membrane and undergo rapid recycling. Class B receptors, like AVPR2, AGTR1, NTSR1, TRHR and TACR1 internalize as a complex with arrestin and traffic with it to endosomal vesicles, presumably as desensitized receptors, for extended periods of time. Receptor resensitization then requires that receptor-bound arrestin is removed so that the receptor can be dephosphorylated and returned to the plasma membrane. Mediates endocytosis of CCR7 following ligation of CCL19 but not CCL21. Involved in internalization of P2RY1, P2RY4, P2RY6 and P2RY11 and ATP-stimulated internalization of P2RY2. Involved in phosphorylation-dependent internalization of OPRD1 and subsequent recycling or degradation. Involved in ubiquitination of IGF1R. Beta-arrestins function as multivalent adapter proteins that can switch the GPCR from a G-protein signaling mode that transmits short-lived signals from the plasma membrane via small molecule second messengers and ion channels to a beta-arrestin signaling mode that transmits a distinct set of signals that are initiated as the receptor internalizes and transits the intracellular compartment. Acts as a signaling scaffold for MAPK pathways such as MAPK1/3 (ERK1/2) and MAPK10 (JNK3). ERK1/2 and JNK3 activated by the beta-arrestin scaffold are largely excluded from the nucleus and confined to cytoplasmic locations such as endocytic vesicles, also called beta-arrestin signalosomes. Acts as a signaling scaffold for the AKT1 pathway. GPCRs for which the beta-arrestin-mediated signaling relies on both ARRB1 and ARRB2 (codependent regulation) include ADRB2, F2RL1 and PTH1R. For some GPCRs the beta-arrestin-mediated signaling relies on either ARRB1 or ARRB2 and is inhibited by the other respective beta-arrestin form (reciprocal regulation). Increases ERK1/2 signaling in AGTR1- and AVPR2-mediated activation (reciprocal regulation). Involved in CCR7-mediated ERK1/2 signaling involving ligand CCL19. Is involved in type-1A angiotensin II receptor/AGTR1-mediated ERK activity. Is involved in type-1A angiotensin II receptor/AGTR1-mediated MAPK10 activity. Is involved in dopamine-stimulated AKT1 activity in the striatum by disrupting the association of AKT1 with its negative regulator PP2A. Involved in AGTR1-mediated chemotaxis. Appears to function as signaling scaffold involved in regulation of MIP-1-beta-stimulated CCR5-dependent chemotaxis. Involved in attenuation of NF-kappa-B-dependent transcription in response to GPCR or cytokine stimulation by interacting with and stabilizing CHUK. Suppresses UV-induced NF-kappa-B-dependent activation by interacting with CHUK. The function is promoted by stimulation of ADRB2 and dephosphorylation of ARRB2. Involved in p53/TP53-mediated apoptosis by regulating MDM2 and reducing the MDM2-mediated degradation of p53/TP53. May serve as nuclear messenger for GPCRs. Upon stimulation of OR1D2, may be involved in regulation of gene expression during the early processes of fertilization. Also involved in regulation of receptors other than GPCRs. Involved in endocytosis of TGFBR2 and TGFBR3 and down-regulates TGF-beta signaling such as NF-kappa-B activation. Involved in endocytosis of low-density lipoprotein receptor/LDLR. Involved in endocytosis of smoothened homolog/Smo, which also requires GRK2. Involved in endocytosis of SLC9A5. Involved in endocytosis of ENG and subsequent TGF-beta-mediated ERK activation and migration of epithelial cells. Involved in Toll-like receptor and IL-1 receptor signaling through the interaction with TRAF6 which prevents TRAF6 autoubiquitination and oligomerization required for activation of NF-kappa-B and JUN. Involved in insulin resistance by acting as insulin-induced signaling scaffold for SRC, AKT1 and INSR. Involved in regulation of inhibitory signaling of natural killer cells by recruiting PTPN6 and PTPN11 to KIR2DL1. Involved in IL8-mediated granule release in neutrophils. Involved in the internalization of the atypical chemokine receptor ACKR3. Acts as an adapter protein coupling FFAR4 receptor to specific downstream signaling pathways, as well as mediating receptor endocytosis. During the activation step of NLRP3 inflammasome, directly associates with NLRP3 leading to inhibition of pro-inflammatory cytokine release and inhibition of inflammation. This is Beta-arrestin-2 (ARRB2) from Homo sapiens (Human).